A 167-amino-acid chain; its full sequence is MRCGPLYRFLWLWPYLSYVEAVPIRKVQDDTKTLIKTIVTRINDISHTQSVSSKQRVTGLDFIPGLHPLLSLSKMDQTLAIYQQILASLPSRNVIQISNDLENLRDLLHLLAASKSCPLPQVRALESLESLGVVLEASLYSTEVVALSRLQGSLQDMLRQLDLSPGC.

A signal peptide spans 1-21; sequence MRCGPLYRFLWLWPYLSYVEA. The cysteines at positions 117 and 167 are disulfide-linked.

It belongs to the leptin family.

The protein localises to the secreted. In terms of biological role, key player in the regulation of energy balance and body weight control. Once released into the circulation, has central and peripheral effects by binding LEPR, found in many tissues, which results in the activation of several major signaling pathways. In the hypothalamus, acts as an appetite-regulating factor that induces a decrease in food intake and an increase in energy consumption by inducing anorexinogenic factors and suppressing orexigenic neuropeptides, also regulates bone mass and secretion of hypothalamo-pituitary-adrenal hormones. In the periphery, increases basal metabolism, influences reproductive function, regulates pancreatic beta-cell function and insulin secretion, is pro-angiogenic for endothelial cell and affects innate and adaptive immunity. In the arcuate nucleus of the hypothalamus, activates by depolarization POMC neurons inducing FOS and SOCS3 expression to release anorexigenic peptides and inhibits by hyperpolarization NPY neurons inducing SOCS3 with a consequent reduction on release of orexigenic peptides. In addition to its known satiety inducing effect, has a modulatory role in nutrient absorption. In the intestine, reduces glucose absorption by enterocytes by activating PKC and leading to a sequential activation of p38, PI3K and ERK signaling pathways which exerts an inhibitory effect on glucose absorption. Acts as a growth factor on certain tissues, through the activation of different signaling pathways increases expression of genes involved in cell cycle regulation such as CCND1, via JAK2-STAT3 pathway, or VEGFA, via MAPK1/3 and PI3K-AKT1 pathways. May also play an apoptotic role via JAK2-STAT3 pathway and up-regulation of BIRC5 expression. Pro-angiogenic, has mitogenic activity on vascular endothelial cells and plays a role in matrix remodeling by regulating the expression of matrix metalloproteinases (MMPs) and tissue inhibitors of metalloproteinases (TIMPs). In innate immunity, modulates the activity and function of neutrophils by increasing chemotaxis and the secretion of oxygen radicals. Increases phagocytosis by macrophages and enhances secretion of pro-inflammatory mediators. Increases cytotoxic ability of NK cells. Plays a pro-inflammatory role, in synergy with IL1B, by inducing NOS2 which promotes the production of IL6, IL8 and Prostaglandin E2, through a signaling pathway that involves JAK2, PI3K, MAP2K1/MEK1 and MAPK14/p38. In adaptive immunity, promotes the switch of memory T-cells towards T helper-1 cell immune responses. Increases CD4(+)CD25(-) T-cell proliferation and reduces autophagy during TCR (T-cell receptor) stimulation, through MTOR signaling pathway activation and BCL2 up-regulation. This is Leptin (LEP) from Capra hircus (Goat).